Consider the following 184-residue polypeptide: ATP synthase subunit b, chloroplastic (184 aa).

A helical transmembrane segment spans residues 26-48 (ILATNLINLSVVLGVLIFFGKGV).

The protein belongs to the ATPase B chain family. As to quaternary structure, F-type ATPases have 2 components, F(1) - the catalytic core - and F(0) - the membrane proton channel. F(1) has five subunits: alpha(3), beta(3), gamma(1), delta(1), epsilon(1). F(0) has four main subunits: a(1), b(1), b'(1) and c(10-14). The alpha and beta chains form an alternating ring which encloses part of the gamma chain. F(1) is attached to F(0) by a central stalk formed by the gamma and epsilon chains, while a peripheral stalk is formed by the delta, b and b' chains.

It localises to the plastid. It is found in the chloroplast thylakoid membrane. Its function is as follows. F(1)F(0) ATP synthase produces ATP from ADP in the presence of a proton or sodium gradient. F-type ATPases consist of two structural domains, F(1) containing the extramembraneous catalytic core and F(0) containing the membrane proton channel, linked together by a central stalk and a peripheral stalk. During catalysis, ATP synthesis in the catalytic domain of F(1) is coupled via a rotary mechanism of the central stalk subunits to proton translocation. In terms of biological role, component of the F(0) channel, it forms part of the peripheral stalk, linking F(1) to F(0). This is ATP synthase subunit b, chloroplastic from Acorus calamus (Sweet flag).